A 396-amino-acid chain; its full sequence is NASP-related protein sim3 (396 aa).

Positions 1–31 are disordered; the sequence is MSSDTKTLENSKGNSATDADTKNPSSSDSRA. 2 TPR repeats span residues 32–65 and 89–122; these read IEQL…SESI and IENS…GSFT. The segment at 135–164 is disordered; the sequence is NEENSSIAHPEKESEEKETNEASPASEEDE. A compositionally biased stretch (basic and acidic residues) spans 143–154; that stretch reads HPEKESEEKETN. Residues 199–232 form a TPR 3 repeat; it reads ADIYDLLGELSLEIENFSQASQDLKTALEWKEKV. Positions 267–329 form a coiled coil; sequence CEHVEKAAEI…QKTLDLKHGA (63 aa). A compositionally biased stretch (basic and acidic residues) spans 284–301; the sequence is RENEVTDKKGKGKQKAEE. Disordered regions lie at residues 284–307 and 334–396; these read RENE…LTSD and EAVM…KKKD. Positions 343 to 353 are enriched in low complexity; it reads SSLLSKDSSSL.

This sequence belongs to the NASP family. Interacts with cnp1, hht1, hht2 and hht3; has a preference for CENP-A (cnp1) over histone H3 (hht1/2/3).

Its subcellular location is the nucleus. Functionally, histone H3 and H3-like CENP-A-specific chaperone. Promotes delivery and incorporation of CENP-A in centromeric chromatin, probably by escorting nascent CENP-A to CENP-A chromatin assembly factors. Required for central core silencing and normal chromosome segregation. In Schizosaccharomyces pombe (strain 972 / ATCC 24843) (Fission yeast), this protein is NASP-related protein sim3 (sim3).